A 208-amino-acid polypeptide reads, in one-letter code: MIGLVGRKVGMTRIFNEDGVSIPVTVIEIEANRVTQVKTLENDGYTAVQVTTGSKKASRVTKPEAGHFVKAGVEAGRGLWEFRTEGEEFTLGQEINVDIFTDVKKVDVTGTSKGKGFQGGVKRWNFRTQDATHGNSLSHRVLGSIGQNQTPGRVFKGKKMAGHLGAERVTVQSLEVVRVDAERKLLLVKGSVPGATNSDVIVKPAVKA.

Gln-149 is subject to N5-methylglutamine.

The protein belongs to the universal ribosomal protein uL3 family. Part of the 50S ribosomal subunit. Forms a cluster with proteins L14 and L19. In terms of processing, methylated by PrmB.

Its function is as follows. One of the primary rRNA binding proteins, it binds directly near the 3'-end of the 23S rRNA, where it nucleates assembly of the 50S subunit. The chain is Large ribosomal subunit protein uL3 from Glaesserella parasuis serovar 5 (strain SH0165) (Haemophilus parasuis).